Reading from the N-terminus, the 493-residue chain is Aspartyl/glutamyl-tRNA(Asn/Gln) amidotransferase subunit B (493 aa).

The segment at Lys-473–Glu-493 is disordered.

This sequence belongs to the GatB/GatE family. GatB subfamily. Heterotrimer of A, B and C subunits.

The enzyme catalyses L-glutamyl-tRNA(Gln) + L-glutamine + ATP + H2O = L-glutaminyl-tRNA(Gln) + L-glutamate + ADP + phosphate + H(+). It carries out the reaction L-aspartyl-tRNA(Asn) + L-glutamine + ATP + H2O = L-asparaginyl-tRNA(Asn) + L-glutamate + ADP + phosphate + 2 H(+). Allows the formation of correctly charged Asn-tRNA(Asn) or Gln-tRNA(Gln) through the transamidation of misacylated Asp-tRNA(Asn) or Glu-tRNA(Gln) in organisms which lack either or both of asparaginyl-tRNA or glutaminyl-tRNA synthetases. The reaction takes place in the presence of glutamine and ATP through an activated phospho-Asp-tRNA(Asn) or phospho-Glu-tRNA(Gln). The chain is Aspartyl/glutamyl-tRNA(Asn/Gln) amidotransferase subunit B from Treponema denticola (strain ATCC 35405 / DSM 14222 / CIP 103919 / JCM 8153 / KCTC 15104).